Consider the following 206-residue polypeptide: Glycerol-3-phosphate acyltransferase (206 aa).

6 consecutive transmembrane segments (helical) span residues 6–26 (IFLA…PSGF), 57–77 (KAAL…ILIA), 86–106 (FHVI…WLNW), 118–138 (VFLG…MAVL), 143–163 (IVSL…FLSL), and 165–185 (EASF…MVLW).

Belongs to the PlsY family. Probably interacts with PlsX.

The protein localises to the cell inner membrane. It catalyses the reaction an acyl phosphate + sn-glycerol 3-phosphate = a 1-acyl-sn-glycero-3-phosphate + phosphate. It functions in the pathway lipid metabolism; phospholipid metabolism. Its function is as follows. Catalyzes the transfer of an acyl group from acyl-phosphate (acyl-PO(4)) to glycerol-3-phosphate (G3P) to form lysophosphatidic acid (LPA). This enzyme utilizes acyl-phosphate as fatty acyl donor, but not acyl-CoA or acyl-ACP. In Prochlorococcus marinus (strain MIT 9211), this protein is Glycerol-3-phosphate acyltransferase.